Consider the following 161-residue polypeptide: GTP-dependent dephospho-CoA kinase (161 aa).

Asp-37, Ile-38, Asp-56, Lys-58, Glu-112, and Asp-135 together coordinate GTP.

This sequence belongs to the GTP-dependent DPCK family.

The enzyme catalyses 3'-dephospho-CoA + GTP = GDP + CoA + H(+). It functions in the pathway cofactor biosynthesis; coenzyme A biosynthesis. In terms of biological role, catalyzes the GTP-dependent phosphorylation of the 3'-hydroxyl group of dephosphocoenzyme A to form coenzyme A (CoA). The sequence is that of GTP-dependent dephospho-CoA kinase from Methanococcus aeolicus (strain ATCC BAA-1280 / DSM 17508 / OCM 812 / Nankai-3).